Consider the following 353-residue polypeptide: MRFISVSSLLLALAPALNAVPVEVAGSAQGLDVTLSQVGNTRIKAVVKNTGSEDVTFVHLNFFKDAAPVQKVSLFRNATEVQFQGIKQRLITEGLSDDALTTLAPGATIEDEFDIASTSDLSEGGTITINSNGLVPITTDNKVTGYIPFTSNELSIDVDAAEAASVTQAVKILERRTKVTSCSGSRLSALQTALRNTVSLARAAATAAQSGSSSRFQEYFKTTSSSTRSTVAARLNAVANEAASTSSGSTTYYCSDVYGYCSSNVLAYTLPSYNIIANCDLYYSYLPALTSTCHAQDQATTTLHEFTHAPGVYSPGTDDLGYGYSAATALSASQALLNADTYALFANAVNLNC.

The N-terminal stretch at methionine 1 to alanine 19 is a signal peptide. Residues valine 20 to arginine 176 constitute a propeptide that is removed on maturation. 2 disulfides stabilise this stretch: cysteine 182–cysteine 254 and cysteine 261–cysteine 279. Histidine 304 contacts Zn(2+). Glutamate 305 is an active-site residue. Zn(2+) is bound by residues histidine 308 and aspartate 319.

The protein belongs to the peptidase M35 family. Zn(2+) is required as a cofactor.

The protein resides in the secreted. The enzyme catalyses Preferential cleavage of bonds with hydrophobic residues in P1'. Also 3-Asn-|-Gln-4 and 8-Gly-|-Ser-9 bonds in insulin B chain.. Functionally, secreted metalloproteinase that allows assimilation of proteinaceous substrates. Shows high activities on basic nuclear substrates such as histone and protamine. The protein is Neutral protease 2 homolog AO090001000135 of Aspergillus oryzae (strain ATCC 42149 / RIB 40) (Yellow koji mold).